Here is a 329-residue protein sequence, read N- to C-terminus: 31 kDa immunogenic protein (329 aa).

An N-terminal signal peptide occupies residues 1–28 (MKFGSKIRRLAVAAVAGAIALGASFAVA).

The protein is 31 kDa immunogenic protein (bcsP31) of Brucella abortus biovar 1 (strain 9-941).